The primary structure comprises 469 residues: ATP synthase subunit beta (469 aa).

156 to 163 (GGAGVGKT) lines the ATP pocket.

This sequence belongs to the ATPase alpha/beta chains family. As to quaternary structure, F-type ATPases have 2 components, CF(1) - the catalytic core - and CF(0) - the membrane proton channel. CF(1) has five subunits: alpha(3), beta(3), gamma(1), delta(1), epsilon(1). CF(0) has three main subunits: a(1), b(2) and c(9-12). The alpha and beta chains form an alternating ring which encloses part of the gamma chain. CF(1) is attached to CF(0) by a central stalk formed by the gamma and epsilon chains, while a peripheral stalk is formed by the delta and b chains.

The protein localises to the cell membrane. The catalysed reaction is ATP + H2O + 4 H(+)(in) = ADP + phosphate + 5 H(+)(out). Produces ATP from ADP in the presence of a proton gradient across the membrane. The catalytic sites are hosted primarily by the beta subunits. In Lactococcus lactis subsp. cremoris (strain MG1363), this protein is ATP synthase subunit beta.